A 268-amino-acid chain; its full sequence is MQIVILKDSAEVAEYGANLIINQLKRKPDSVLGLATGSTPVSLYQRLVAANQAGAVSFEGVTSFNLDEYLGLEGSHPQSYRYFMDSQLFDAIDINKANTHVPPGDAEDPIAACEAYEAQIQAAGGIDIQLLGIGRNGHIGFNEPSSGLMSRTRVKTLTQATIEDNARFFAEGEYQPHLSITMGIGTILDAKKVLLLATGESKADAIRAAVEGALSAACPASALQLHRDAVLVIDEAAASKLADKEFYRHIEAENQLLQARLAALKAGE.

The active-site Proton acceptor; for enolization step is the D67. The active-site For ring-opening step is the N136. The Proton acceptor; for ring-opening step role is filled by H138. E143 (for ring-opening step) is an active-site residue.

Belongs to the glucosamine/galactosamine-6-phosphate isomerase family. NagB subfamily. As to quaternary structure, homohexamer.

The enzyme catalyses alpha-D-glucosamine 6-phosphate + H2O = beta-D-fructose 6-phosphate + NH4(+). It functions in the pathway amino-sugar metabolism; N-acetylneuraminate degradation; D-fructose 6-phosphate from N-acetylneuraminate: step 5/5. Functionally, catalyzes the reversible isomerization-deamination of glucosamine 6-phosphate (GlcN6P) to form fructose 6-phosphate (Fru6P) and ammonium ion. The polypeptide is Glucosamine-6-phosphate deaminase (Shewanella loihica (strain ATCC BAA-1088 / PV-4)).